The sequence spans 349 residues: Ferredoxin--NADP reductase 1 (349 aa).

Positions 36, 44, 48, 88, 123, 290, and 331 each coordinate FAD.

The protein belongs to the ferredoxin--NADP reductase type 2 family. In terms of assembly, homodimer. The cofactor is FAD.

It catalyses the reaction 2 reduced [2Fe-2S]-[ferredoxin] + NADP(+) + H(+) = 2 oxidized [2Fe-2S]-[ferredoxin] + NADPH. In Bacillus mycoides (strain KBAB4) (Bacillus weihenstephanensis), this protein is Ferredoxin--NADP reductase 1.